A 146-amino-acid chain; its full sequence is MTIKLHDLRPAPGSKTPRTRVGRGEGSKGKTAGRGTKGTKARKQVPTTFEGGQMPIHMRLPKLKGFRNRFRTEYEIVNVGDIARLFPEGGTVGVDELVAKGAVRKNSLVKVLGDGKLTVKVDITAHKFSGSAREQITAAGGSVTEL.

The interval 1–54 (MTIKLHDLRPAPGSKTPRTRVGRGEGSKGKTAGRGTKGTKARKQVPTTFEGGQM) is disordered.

It belongs to the universal ribosomal protein uL15 family. In terms of assembly, part of the 50S ribosomal subunit.

Binds to the 23S rRNA. The protein is Large ribosomal subunit protein uL15 of Mycobacterium ulcerans (strain Agy99).